A 360-amino-acid chain; its full sequence is Peptide chain release factor 1 (360 aa).

Gln236 is modified (N5-methylglutamine). A disordered region spans residues 288–308 (QDEQDAERKSTIGTGDRSERI). A compositionally biased stretch (basic and acidic residues) spans 293 to 308 (AERKSTIGTGDRSERI).

Belongs to the prokaryotic/mitochondrial release factor family. In terms of processing, methylated by PrmC. Methylation increases the termination efficiency of RF1.

It localises to the cytoplasm. Peptide chain release factor 1 directs the termination of translation in response to the peptide chain termination codons UAG and UAA. This Streptococcus equi subsp. equi (strain 4047) protein is Peptide chain release factor 1.